Consider the following 176-residue polypeptide: NAD(P)H-quinone oxidoreductase subunit 6, chloroplastic (176 aa).

5 consecutive transmembrane segments (helical) span residues 10 to 30 (FLLV…VLLP), 32 to 52 (PIYS…FYIL), 61 to 81 (AQLL…VMFM), 92 to 112 (LWTV…ISLI), and 152 to 172 (FFLP…GAIA).

Belongs to the complex I subunit 6 family. NDH is composed of at least 16 different subunits, 5 of which are encoded in the nucleus.

It is found in the plastid. The protein localises to the chloroplast thylakoid membrane. It catalyses the reaction a plastoquinone + NADH + (n+1) H(+)(in) = a plastoquinol + NAD(+) + n H(+)(out). It carries out the reaction a plastoquinone + NADPH + (n+1) H(+)(in) = a plastoquinol + NADP(+) + n H(+)(out). In terms of biological role, NDH shuttles electrons from NAD(P)H:plastoquinone, via FMN and iron-sulfur (Fe-S) centers, to quinones in the photosynthetic chain and possibly in a chloroplast respiratory chain. The immediate electron acceptor for the enzyme in this species is believed to be plastoquinone. Couples the redox reaction to proton translocation, and thus conserves the redox energy in a proton gradient. The protein is NAD(P)H-quinone oxidoreductase subunit 6, chloroplastic (ndhG) of Atropa belladonna (Belladonna).